A 327-amino-acid polypeptide reads, in one-letter code: MAADGTIRHDWAIDEIVALHNLPLLELVGRANAVHRMHHDPNKVQKASLLSIKTGGCPENCAYCPQSAHHREVDLTRDRLMDPESVVAMAATARAAGAERFCMGAAWRQVRDGREFDAVIEMVKGVRALGMEACVTLGMLKPHQAERLAAAGLTAYNHNLDTSPEFYGQIITTRTYQDRLDTLATVRSFGIDLCCGGIIGMGETIRDRASMLHILAAMEPHPESVPINALVPVEGTPLAKRPVIAPLELVRMVATARLVMPASTVRLSAGRSNLNREAQILCLVAGANSVFYGDTLLTTPNAGIGEDAELFAAIGELDCDHVSASAA.

In terms of domain architecture, Radical SAM core spans 42–268 (NKVQKASLLS…VMPASTVRLS (227 aa)). 3 residues coordinate [4Fe-4S] cluster: cysteine 57, cysteine 61, and cysteine 64. [2Fe-2S] cluster-binding residues include cysteine 102, cysteine 134, cysteine 194, and arginine 266.

The protein belongs to the radical SAM superfamily. Biotin synthase family. In terms of assembly, homodimer. [4Fe-4S] cluster serves as cofactor. Requires [2Fe-2S] cluster as cofactor.

The enzyme catalyses (4R,5S)-dethiobiotin + (sulfur carrier)-SH + 2 reduced [2Fe-2S]-[ferredoxin] + 2 S-adenosyl-L-methionine = (sulfur carrier)-H + biotin + 2 5'-deoxyadenosine + 2 L-methionine + 2 oxidized [2Fe-2S]-[ferredoxin]. Its pathway is cofactor biosynthesis; biotin biosynthesis; biotin from 7,8-diaminononanoate: step 2/2. In terms of biological role, catalyzes the conversion of dethiobiotin (DTB) to biotin by the insertion of a sulfur atom into dethiobiotin via a radical-based mechanism. This is Biotin synthase from Rhizobium rhizogenes (strain K84 / ATCC BAA-868) (Agrobacterium radiobacter).